The sequence spans 229 residues: UPF0758 protein CLL_A0562 (229 aa).

The 123-residue stretch at lysine 107–isoleucine 229 folds into the MPN domain. 3 residues coordinate Zn(2+): histidine 178, histidine 180, and aspartate 191. Residues histidine 178–aspartate 191 carry the JAMM motif motif.

Belongs to the UPF0758 family.

The chain is UPF0758 protein CLL_A0562 from Clostridium botulinum (strain Eklund 17B / Type B).